The chain runs to 273 residues: uncharacterized protein (273 aa).

This is an uncharacterized protein from Mycobacterium bovis (strain ATCC BAA-935 / AF2122/97).